The sequence spans 122 residues: Large ribosomal subunit protein uL14 (122 aa).

This sequence belongs to the universal ribosomal protein uL14 family. Part of the 50S ribosomal subunit. Forms a cluster with proteins L3 and L19. In the 70S ribosome, L14 and L19 interact and together make contacts with the 16S rRNA in bridges B5 and B8.

In terms of biological role, binds to 23S rRNA. Forms part of two intersubunit bridges in the 70S ribosome. The chain is Large ribosomal subunit protein uL14 from Desulfovibrio desulfuricans (strain ATCC 27774 / DSM 6949 / MB).